Reading from the N-terminus, the 596-residue chain is Chloride intracellular channel protein 6 (596 aa).

Residues 1–360 (MAEATEPKEV…ALEEGDPGQE (360 aa)) form a disordered region. Basic and acidic residues predominate over residues 34-48 (LEGREASEEAAEAPR). Ser-40 is subject to Phosphoserine. The span at 65–74 (GCGQDEGTGG) shows a compositional bias: gly residues. Residues 83 to 98 (GPEAETPGASGAPGEA) are compositionally biased toward low complexity. Polar residues predominate over residues 118-130 (SAQQVQGMSSGLD). Positions 148-160 (DPTASEAGEEAES) are enriched in acidic residues. Composition is skewed to low complexity over residues 197-213 (GSESEPQGGGESSPQPQ) and 225-244 (GGNESGELAGASAADAAGEG). Over residues 246 to 290 (TLGKDGSEEAASEDARVDAHENGDQGKLQEETGEEEARPEPELKG) the composition is skewed to basic and acidic residues. Ser-304 is subject to Phosphoserine. Over residues 338–348 (ELGRVNGRREN) the composition is skewed to basic and acidic residues. The G-site motif lies at 379–382 (CPFS). A helical membrane pass occupies residues 381–401 (FSQRLFMILWLKGVIFNVTTV). Positions 425–596 (DGEVKTDVNK…AYSDAAKRMK (172 aa)) constitute a GST C-terminal domain.

This sequence belongs to the chloride channel CLIC family. In terms of assembly, monomer (soluble state). Interacts with dopamine receptors DRD2, DRD3 and DRD4. In terms of processing, phosphorylated.

Its subcellular location is the cytoplasm. It is found in the cell membrane. The enzyme catalyses chloride(in) = chloride(out). With respect to regulation, channel activity is redox- and pH-regulated. Inhibited by IAA-94. In terms of biological role, in the soluble state, catalyzes glutaredoxin-like thiol disulfide exchange reactions with reduced glutathione as electron donor. Can insert into membranes and form voltage-dependent chloride-selective channels. The channel opens upon membrane depolarization at positive voltages and closes at negative membrane voltages. May play a critical role in water-secreting cells, possibly through the regulation of chloride ion transport. The chain is Chloride intracellular channel protein 6 (Clic6) from Mus musculus (Mouse).